Consider the following 439-residue polypeptide: Vacuolar protein sorting-associated protein 4 (439 aa).

In terms of domain architecture, MIT spans Leu8–Leu75. The tract at residues Glu76 to Asp113 is disordered. Polar residues predominate over residues Gln80 to Thr93. Gly175 to Ser182 lines the ATP pocket.

This sequence belongs to the AAA ATPase family. In terms of assembly, monomer or homodimer (in nucleotide-free form). Decamer, dodecamer or tetradecamer of two stacked respective homooligomeric rings (when bound to ATP); the dodecameric form seems to be predominant.

It localises to the endosome membrane. Pre-vacuolar protein sorting protein involved in the transport of biosynthetic membrane proteins from the prevacuolar/endosomal compartment to the vacuole. Required for multivesicular body (MVB) protein sorting. Catalyzes the ATP-dependent dissociation of class E VPS proteins from endosomal membranes, such as the disassembly of the ESCRT-III complex. Required for extracellular secretion of the secreted aspartyl proteases SAP2, SAP4, SAP5, and SAP6. Its regulation of the pre-vacuolar secretory pathway is critical for virulence. In Candida albicans (strain SC5314 / ATCC MYA-2876) (Yeast), this protein is Vacuolar protein sorting-associated protein 4.